A 310-amino-acid chain; its full sequence is Putative S-adenosyl-L-methionine-dependent methyltransferase Mvan_1346 (310 aa).

S-adenosyl-L-methionine-binding positions include D136 and D165 to L166.

Belongs to the UPF0677 family.

Exhibits S-adenosyl-L-methionine-dependent methyltransferase activity. This chain is Putative S-adenosyl-L-methionine-dependent methyltransferase Mvan_1346, found in Mycolicibacterium vanbaalenii (strain DSM 7251 / JCM 13017 / BCRC 16820 / KCTC 9966 / NRRL B-24157 / PYR-1) (Mycobacterium vanbaalenii).